We begin with the raw amino-acid sequence, 189 residues long: Peptidyl-tRNA hydrolase (189 aa).

Position 14 (Tyr-14) interacts with tRNA. His-19 (proton acceptor) is an active-site residue. Residues Tyr-64, Asn-66, and Asn-112 each coordinate tRNA.

This sequence belongs to the PTH family. In terms of assembly, monomer.

The protein localises to the cytoplasm. The enzyme catalyses an N-acyl-L-alpha-aminoacyl-tRNA + H2O = an N-acyl-L-amino acid + a tRNA + H(+). Hydrolyzes ribosome-free peptidyl-tRNAs (with 1 or more amino acids incorporated), which drop off the ribosome during protein synthesis, or as a result of ribosome stalling. In terms of biological role, catalyzes the release of premature peptidyl moieties from peptidyl-tRNA molecules trapped in stalled 50S ribosomal subunits, and thus maintains levels of free tRNAs and 50S ribosomes. This chain is Peptidyl-tRNA hydrolase, found in Dehalococcoides mccartyi (strain ATCC BAA-2266 / KCTC 15142 / 195) (Dehalococcoides ethenogenes (strain 195)).